Here is a 96-residue protein sequence, read N- to C-terminus: Phosphoribosyl-ATP pyrophosphatase (96 aa).

Belongs to the PRA-PH family.

The protein resides in the cytoplasm. The enzyme catalyses 1-(5-phospho-beta-D-ribosyl)-ATP + H2O = 1-(5-phospho-beta-D-ribosyl)-5'-AMP + diphosphate + H(+). It functions in the pathway amino-acid biosynthesis; L-histidine biosynthesis; L-histidine from 5-phospho-alpha-D-ribose 1-diphosphate: step 2/9. In Methanobrevibacter smithii (strain ATCC 35061 / DSM 861 / OCM 144 / PS), this protein is Phosphoribosyl-ATP pyrophosphatase.